Consider the following 402-residue polypeptide: Dual-specificity RNA methyltransferase RlmN (402 aa).

Glu94 acts as the Proton acceptor in catalysis. In terms of domain architecture, Radical SAM core spans 100-351 (EDDRGTLCIS…ATVRKTRGDD (252 aa)). Residues Cys107 and Cys356 are joined by a disulfide bond. [4Fe-4S] cluster contacts are provided by Cys114, Cys118, and Cys121. Residues 182–183 (GE), Ser214, 236–238 (SLH), and Asn313 each bind S-adenosyl-L-methionine. Catalysis depends on Cys356, which acts as the S-methylcysteine intermediate.

The protein belongs to the radical SAM superfamily. RlmN family. [4Fe-4S] cluster serves as cofactor.

It localises to the cytoplasm. The enzyme catalyses adenosine(2503) in 23S rRNA + 2 reduced [2Fe-2S]-[ferredoxin] + 2 S-adenosyl-L-methionine = 2-methyladenosine(2503) in 23S rRNA + 5'-deoxyadenosine + L-methionine + 2 oxidized [2Fe-2S]-[ferredoxin] + S-adenosyl-L-homocysteine. The catalysed reaction is adenosine(37) in tRNA + 2 reduced [2Fe-2S]-[ferredoxin] + 2 S-adenosyl-L-methionine = 2-methyladenosine(37) in tRNA + 5'-deoxyadenosine + L-methionine + 2 oxidized [2Fe-2S]-[ferredoxin] + S-adenosyl-L-homocysteine. Its function is as follows. Specifically methylates position 2 of adenine 2503 in 23S rRNA and position 2 of adenine 37 in tRNAs. m2A2503 modification seems to play a crucial role in the proofreading step occurring at the peptidyl transferase center and thus would serve to optimize ribosomal fidelity. The protein is Dual-specificity RNA methyltransferase RlmN of Polynucleobacter asymbioticus (strain DSM 18221 / CIP 109841 / QLW-P1DMWA-1) (Polynucleobacter necessarius subsp. asymbioticus).